An 88-amino-acid polypeptide reads, in one-letter code: MANTPSAQKAVRKVAARTQVNRARRSRVRTFMRKFDDALAGGDRASAEVAFKNFEPEIMRAVSKGVFHKNAAARKVSRLAKRLKALSV.

Belongs to the bacterial ribosomal protein bS20 family.

In terms of biological role, binds directly to 16S ribosomal RNA. The chain is Small ribosomal subunit protein bS20 from Bartonella henselae (strain ATCC 49882 / DSM 28221 / CCUG 30454 / Houston 1) (Rochalimaea henselae).